The chain runs to 738 residues: DNA topoisomerase 4 subunit A (738 aa).

One can recognise a Topo IIA-type catalytic domain in the interval 32–496; sequence LPDVRDGLKP…SFEEVDLTNQ (465 aa). Y120 functions as the O-(5'-phospho-DNA)-tyrosine intermediate in the catalytic mechanism.

The protein belongs to the type II topoisomerase GyrA/ParC subunit family. ParC type 1 subfamily. As to quaternary structure, heterotetramer composed of ParC and ParE.

The protein resides in the cell membrane. It carries out the reaction ATP-dependent breakage, passage and rejoining of double-stranded DNA.. Its function is as follows. Topoisomerase IV is essential for chromosome segregation. It relaxes supercoiled DNA. Performs the decatenation events required during the replication of a circular DNA molecule. This Rickettsia prowazekii (strain Madrid E) protein is DNA topoisomerase 4 subunit A.